Reading from the N-terminus, the 549-residue chain is Hydroxylamine reductase (549 aa).

Residues C3, C6, C18, and C25 each contribute to the [2Fe-2S] cluster site. Hybrid [4Fe-2O-2S] cluster is bound by residues H248, E272, C316, C404, C432, C457, E491, and K493. At C404 the chain carries Cysteine persulfide.

The protein belongs to the HCP family. [2Fe-2S] cluster is required as a cofactor. Requires hybrid [4Fe-2O-2S] cluster as cofactor.

It is found in the cytoplasm. The catalysed reaction is A + NH4(+) + H2O = hydroxylamine + AH2 + H(+). In terms of biological role, catalyzes the reduction of hydroxylamine to form NH(3) and H(2)O. In Aeromonas hydrophila subsp. hydrophila (strain ATCC 7966 / DSM 30187 / BCRC 13018 / CCUG 14551 / JCM 1027 / KCTC 2358 / NCIMB 9240 / NCTC 8049), this protein is Hydroxylamine reductase.